Consider the following 226-residue polypeptide: UPF0758 protein SAK_1186 (226 aa).

Residues 103 to 225 (QILSSEQLAR…YYSFREEADI (123 aa)) form the MPN domain. Residues histidine 174, histidine 176, and aspartate 187 each contribute to the Zn(2+) site. Positions 174–187 (HNHPSGSPKPSESD) match the JAMM motif motif.

The protein belongs to the UPF0758 family.

In Streptococcus agalactiae serotype Ia (strain ATCC 27591 / A909 / CDC SS700), this protein is UPF0758 protein SAK_1186.